We begin with the raw amino-acid sequence, 469 residues long: Citrate synthase, mitochondrial (469 aa).

The N-terminal 30 residues, 1-30 (MSFLSVSRLAPKLLNSKNATYFLVAARNAS), are a transit peptide targeting the mitochondrion. Active-site residues include His-304 and His-350. Arg-359 contributes to the oxaloacetate binding site. The active site involves Asp-405. Arg-431 and Arg-451 together coordinate oxaloacetate.

It belongs to the citrate synthase family. Homodimer.

The protein localises to the mitochondrion matrix. The enzyme catalyses oxaloacetate + acetyl-CoA + H2O = citrate + CoA + H(+). The protein operates within carbohydrate metabolism; tricarboxylic acid cycle; isocitrate from oxaloacetate: step 1/2. Key enzyme of the Krebs tricarboxylic acid cycle which catalyzes the synthesis of citrate from acetyl coenzyme A and oxaloacetate. This is Citrate synthase, mitochondrial (cs) from Thunnus albacares (Yellowfin tuna).